The sequence spans 701 residues: Elongation factor G (701 aa).

The 283-residue stretch at 8–290 (SLYRNIGISA…AVVELLPAPT (283 aa)) folds into the tr-type G domain. Residues 17–24 (AHIDAGKT), 88–92 (DTPGH), and 142–145 (NKMD) each bind GTP.

This sequence belongs to the TRAFAC class translation factor GTPase superfamily. Classic translation factor GTPase family. EF-G/EF-2 subfamily.

Its subcellular location is the cytoplasm. Functionally, catalyzes the GTP-dependent ribosomal translocation step during translation elongation. During this step, the ribosome changes from the pre-translocational (PRE) to the post-translocational (POST) state as the newly formed A-site-bound peptidyl-tRNA and P-site-bound deacylated tRNA move to the P and E sites, respectively. Catalyzes the coordinated movement of the two tRNA molecules, the mRNA and conformational changes in the ribosome. In Neisseria gonorrhoeae (strain ATCC 700825 / FA 1090), this protein is Elongation factor G.